The following is a 75-amino-acid chain: Dermaseptin-A3 (75 aa).

Residues 1-22 (MAFLKKSLFLVLLLGLISLSIC) form the signal peptide. Positions 23–43 (EEEKRENEVEEEQEDDEQSEL) are excised as a propeptide. Glutamine 72 is subject to Glutamine amide. The propeptide occupies 74–75 (EQ).

This sequence belongs to the frog skin active peptide (FSAP) family. Dermaseptin subfamily. Expressed by the skin glands.

The protein localises to the secreted. Functionally, possesses a potent antimicrobial activity against Gram-positive and Gram-negative bacteria. Probably acts by disturbing membrane functions with its amphipathic structure. This chain is Dermaseptin-A3, found in Agalychnis annae (Blue-sided leaf frog).